The following is a 370-amino-acid chain: D-aspartate oxidase (370 aa).

I15, A49, S50, G54, V166, R317, G346, and Q348 together coordinate FAD. The short motif at 368-370 (ARL) is the Microbody targeting signal element.

The protein belongs to the DAMOX/DASOX family. In terms of assembly, homotetramer. FAD serves as cofactor.

Its subcellular location is the peroxisome matrix. It carries out the reaction D-aspartate + O2 + H2O = oxaloacetate + H2O2 + NH4(+). The catalysed reaction is D-glutamate + O2 + H2O = H2O2 + 2-oxoglutarate + NH4(+). With respect to regulation, inhibited by malonate and D-malate. Very mildly inhibited by benzoate, ethylenediaminetetraacetic acid (EDTA), crotonate and anthranilate. May be very mildly inhibited by meso-tartrate. Selectively catalyzes the oxidative deamination of acidic amino acids. Protects the organism from the toxicity of D-amino acids. Enables the organism to utilize D-amino acids as a source of nutrients. Enables the organism to utilize D-aspartate as a source of nitrogen and carbon. The chain is D-aspartate oxidase from Vanrija humicola (Yeast).